The following is a 334-amino-acid chain: Cathepsin K (334 aa).

The first 19 residues, 1 to 19, serve as a signal peptide directing secretion; it reads MLRLHWLALLVLLLPMAAA. The propeptide at 20–119 is activation peptide; that stretch reads QLRPEPELDA…TLYVPDWSSR (100 aa). Asn-108 carries an N-linked (GlcNAc...) asparagine glycan. 3 disulfide bridges follow: Cys-141–Cys-182, Cys-175–Cys-215, and Cys-274–Cys-323. The active site involves Cys-144. Active-site residues include His-281 and Asn-301.

The protein belongs to the peptidase C1 family.

The catalysed reaction is Broad proteolytic activity. With small-molecule substrates and inhibitors, the major determinant of specificity is P2, which is preferably Leu, Met &gt; Phe, and not Arg.. Functionally, closely involved in osteoclastic bone resorption and may participate partially in the disorder of bone remodeling. Displays potent endoprotease activity against fibrinogen at acid pH. May play an important role in extracellular matrix degradation. The sequence is that of Cathepsin K (CTSK) from Gallus gallus (Chicken).